The primary structure comprises 412 residues: Gamma-glutamyl phosphate reductase (412 aa).

It belongs to the gamma-glutamyl phosphate reductase family.

The protein localises to the cytoplasm. It carries out the reaction L-glutamate 5-semialdehyde + phosphate + NADP(+) = L-glutamyl 5-phosphate + NADPH + H(+). Its pathway is amino-acid biosynthesis; L-proline biosynthesis; L-glutamate 5-semialdehyde from L-glutamate: step 2/2. In terms of biological role, catalyzes the NADPH-dependent reduction of L-glutamate 5-phosphate into L-glutamate 5-semialdehyde and phosphate. The product spontaneously undergoes cyclization to form 1-pyrroline-5-carboxylate. This chain is Gamma-glutamyl phosphate reductase, found in Streptococcus suis (strain 98HAH33).